A 217-amino-acid chain; its full sequence is Holliday junction branch migration complex subunit RuvA (217 aa).

Residues M1–E64 form a domain I region. Residues T65–F145 form a domain II region. Residues V146–H160 form a flexible linker region. Residues T161–K217 are domain III.

This sequence belongs to the RuvA family. As to quaternary structure, homotetramer. Forms an RuvA(8)-RuvB(12)-Holliday junction (HJ) complex. HJ DNA is sandwiched between 2 RuvA tetramers; dsDNA enters through RuvA and exits via RuvB. An RuvB hexamer assembles on each DNA strand where it exits the tetramer. Each RuvB hexamer is contacted by two RuvA subunits (via domain III) on 2 adjacent RuvB subunits; this complex drives branch migration. In the full resolvosome a probable DNA-RuvA(4)-RuvB(12)-RuvC(2) complex forms which resolves the HJ.

Its subcellular location is the cytoplasm. The RuvA-RuvB-RuvC complex processes Holliday junction (HJ) DNA during genetic recombination and DNA repair, while the RuvA-RuvB complex plays an important role in the rescue of blocked DNA replication forks via replication fork reversal (RFR). RuvA specifically binds to HJ cruciform DNA, conferring on it an open structure. The RuvB hexamer acts as an ATP-dependent pump, pulling dsDNA into and through the RuvAB complex. HJ branch migration allows RuvC to scan DNA until it finds its consensus sequence, where it cleaves and resolves the cruciform DNA. The chain is Holliday junction branch migration complex subunit RuvA from Bartonella bacilliformis (strain ATCC 35685 / KC583 / Herrer 020/F12,63).